We begin with the raw amino-acid sequence, 546 residues long: Putative serine hydroxymethyltransferase, mitochondrial (546 aa).

The N-terminal 64 residues, 1–64 (MSSFQSTAAV…RFSSSSIAND (64 aa)), are a transit peptide targeting the mitochondrion. Position 305 is an N6-(pyridoxal phosphate)lysine (Lys-305).

It belongs to the SHMT family. As to quaternary structure, homotetramer. Requires pyridoxal 5'-phosphate as cofactor.

It is found in the mitochondrion. The enzyme catalyses (6R)-5,10-methylene-5,6,7,8-tetrahydrofolate + glycine + H2O = (6S)-5,6,7,8-tetrahydrofolate + L-serine. Its pathway is one-carbon metabolism; tetrahydrofolate interconversion. Its function is as follows. Interconversion of serine and glycine. In Neurospora crassa (strain ATCC 24698 / 74-OR23-1A / CBS 708.71 / DSM 1257 / FGSC 987), this protein is Putative serine hydroxymethyltransferase, mitochondrial (cbs-2).